The following is a 159-amino-acid chain: 2-C-methyl-D-erythritol 2,4-cyclodiphosphate synthase (159 aa).

A divalent metal cation is bound by residues D11 and H13. 4-CDP-2-C-methyl-D-erythritol 2-phosphate-binding positions include 11–13 (DVH) and 37–38 (HS). Residue H45 coordinates a divalent metal cation. Residues 59 to 61 (DIG) and 64 to 68 (FPDSD) each bind 4-CDP-2-C-methyl-D-erythritol 2-phosphate.

The protein belongs to the IspF family. Homotrimer. The cofactor is a divalent metal cation.

It carries out the reaction 4-CDP-2-C-methyl-D-erythritol 2-phosphate = 2-C-methyl-D-erythritol 2,4-cyclic diphosphate + CMP. The protein operates within isoprenoid biosynthesis; isopentenyl diphosphate biosynthesis via DXP pathway; isopentenyl diphosphate from 1-deoxy-D-xylulose 5-phosphate: step 4/6. Functionally, involved in the biosynthesis of isopentenyl diphosphate (IPP) and dimethylallyl diphosphate (DMAPP), two major building blocks of isoprenoid compounds. Catalyzes the conversion of 4-diphosphocytidyl-2-C-methyl-D-erythritol 2-phosphate (CDP-ME2P) to 2-C-methyl-D-erythritol 2,4-cyclodiphosphate (ME-CPP) with a corresponding release of cytidine 5-monophosphate (CMP). In Solibacter usitatus (strain Ellin6076), this protein is 2-C-methyl-D-erythritol 2,4-cyclodiphosphate synthase.